A 544-amino-acid chain; its full sequence is Matrilin-1 (544 aa).

An N-terminal signal peptide occupies residues 1–26 (MRALSGPRLMLCGLLLLLFQAPCALG). The VWFA 1 domain occupies 42–217 (DLVFVVDSSR…SVIEKLSKKF (176 aa)). Residue Asn-77 is glycosylated (N-linked (GlcNAc...) asparagine). The EGF-like domain maps to 224–264 (VSDLCATGDHDCEQVCVSSPGSYTCACREGFTLNSDGKTCN). 3 disulfides stabilise this stretch: Cys-228–Cys-239, Cys-235–Cys-248, and Cys-250–Cys-263. Residues 276–448 (DLVFLIDGSK…KTINQIGKKL (173 aa)) form the VWFA 2 domain. Asn-345 carries N-linked (GlcNAc...) asparagine glycosylation.

As to quaternary structure, homotrimer. Part of a complex composed of MATN1 (via VWFA1 domain), type 2 collagens and type 6 collagens. Forms a complex (via covalent bonds) with ACAN; the interaction increases in abundance with increasing age of the organism via an increase in occupancy of MATN1 binding sites. Interacts with COMP. In terms of processing, N-glycosylated; reduces binding affinity for type 2 collagens. Expressed in trachea from fetus into adulthood (at protein level).

Its subcellular location is the secreted. The protein resides in the extracellular space. The protein localises to the extracellular matrix. Its function is as follows. A major component of the extracellular matrix of non-articular cartilage. Binds to type 2 collagens and forms long concatenated protein networks as part of the extracellular matrix. Required for the network-like organization and bundling of collagen fibrils surrounding chondrocytes in the zones of maturation and hypertrophy. Required for mechanotransduction and adaption to mechanical loading in cartilage chondrocytes, resulting in an increase in expression of the extracellular matrix components ACAN and COL2A1. Acts as a moderator of angiogenesis in response to injury. This chain is Matrilin-1, found in Bos taurus (Bovine).